Consider the following 379-residue polypeptide: Queuine tRNA-ribosyltransferase (379 aa).

Residue Asp-94 is the Proton acceptor of the active site. Residues 94–98 (DSGGF), Asp-148, Gln-191, and Gly-218 each bind substrate. Residues 249–255 (GVGSPDS) form an RNA binding region. The Nucleophile role is filled by Asp-268. Residues 273-277 (TRIAR) are RNA binding; important for wobble base 34 recognition. Positions 306, 308, 311, and 337 each coordinate Zn(2+).

This sequence belongs to the queuine tRNA-ribosyltransferase family. In terms of assembly, homodimer. Within each dimer, one monomer is responsible for RNA recognition and catalysis, while the other monomer binds to the replacement base PreQ1. It depends on Zn(2+) as a cofactor.

It carries out the reaction 7-aminomethyl-7-carbaguanine + guanosine(34) in tRNA = 7-aminomethyl-7-carbaguanosine(34) in tRNA + guanine. It functions in the pathway tRNA modification; tRNA-queuosine biosynthesis. Catalyzes the base-exchange of a guanine (G) residue with the queuine precursor 7-aminomethyl-7-deazaguanine (PreQ1) at position 34 (anticodon wobble position) in tRNAs with GU(N) anticodons (tRNA-Asp, -Asn, -His and -Tyr). Catalysis occurs through a double-displacement mechanism. The nucleophile active site attacks the C1' of nucleotide 34 to detach the guanine base from the RNA, forming a covalent enzyme-RNA intermediate. The proton acceptor active site deprotonates the incoming PreQ1, allowing a nucleophilic attack on the C1' of the ribose to form the product. After dissociation, two additional enzymatic reactions on the tRNA convert PreQ1 to queuine (Q), resulting in the hypermodified nucleoside queuosine (7-(((4,5-cis-dihydroxy-2-cyclopenten-1-yl)amino)methyl)-7-deazaguanosine). This Bacillus cereus (strain Q1) protein is Queuine tRNA-ribosyltransferase.